Reading from the N-terminus, the 402-residue chain is Succinyl-diaminopimelate desuccinylase (402 aa).

His88 contributes to the Zn(2+) binding site. Residue Asp90 is part of the active site. Asp121 serves as a coordination point for Zn(2+). The Proton acceptor role is filled by Glu155. Residues Glu156, Glu184, and His374 each coordinate Zn(2+).

The protein belongs to the peptidase M20A family. DapE subfamily. As to quaternary structure, homodimer. Zn(2+) serves as cofactor. The cofactor is Co(2+).

It carries out the reaction N-succinyl-(2S,6S)-2,6-diaminopimelate + H2O = (2S,6S)-2,6-diaminopimelate + succinate. The protein operates within amino-acid biosynthesis; L-lysine biosynthesis via DAP pathway; LL-2,6-diaminopimelate from (S)-tetrahydrodipicolinate (succinylase route): step 3/3. In terms of biological role, catalyzes the hydrolysis of N-succinyl-L,L-diaminopimelic acid (SDAP), forming succinate and LL-2,6-diaminopimelate (DAP), an intermediate involved in the bacterial biosynthesis of lysine and meso-diaminopimelic acid, an essential component of bacterial cell walls. The polypeptide is Succinyl-diaminopimelate desuccinylase (Psychrobacter sp. (strain PRwf-1)).